We begin with the raw amino-acid sequence, 272 residues long: uncharacterized protein (272 aa).

Residues M1 to G22 form the signal peptide. C23 carries the N-palmitoyl cysteine lipid modification. Residue C23 is the site of S-diacylglycerol cysteine attachment.

It belongs to the staphylococcal tandem lipoprotein family.

It is found in the cell membrane. This is an uncharacterized protein from Staphylococcus aureus (strain MRSA252).